A 698-amino-acid chain; its full sequence is Potassium-transporting ATPase ATP-binding subunit (698 aa).

Helical transmembrane passes span 56 to 76 (IMFVVEIGFFITLLLSVVPSL), 82 to 102 (LWFNITVTLVLLFTVFFANFA), 240 to 260 (TVLISLTLIFLIAVVTLPLFT), and 271 to 291 (ILVALLVCLIPTTIGGLLSAI). Asp-324 serves as the catalytic 4-aspartylphosphate intermediate. ATP-binding positions include Asp-361, Glu-365, 393–400 (FKAETRMS), and Lys-412. Mg(2+) is bound by residues Asp-535 and Asp-539. Helical transmembrane passes span 605–625 (FAIIPAMFTVAIPQMEALNIM), 633–653 (AILSALIFNALIIPMLIPLAM), and 677–697 (GGVLVPFIGIKLVDLVVGLFI).

This sequence belongs to the cation transport ATPase (P-type) (TC 3.A.3) family. Type IA subfamily. In terms of assembly, the system is composed of three essential subunits: KdpA, KdpB and KdpC.

It localises to the cell membrane. The enzyme catalyses K(+)(out) + ATP + H2O = K(+)(in) + ADP + phosphate + H(+). Functionally, part of the high-affinity ATP-driven potassium transport (or Kdp) system, which catalyzes the hydrolysis of ATP coupled with the electrogenic transport of potassium into the cytoplasm. This subunit is responsible for energy coupling to the transport system and for the release of the potassium ions to the cytoplasm. In Bacillus cytotoxicus (strain DSM 22905 / CIP 110041 / 391-98 / NVH 391-98), this protein is Potassium-transporting ATPase ATP-binding subunit.